The following is a 195-amino-acid chain: Imidazoleglycerol-phosphate dehydratase (195 aa).

Belongs to the imidazoleglycerol-phosphate dehydratase family.

Its subcellular location is the cytoplasm. The catalysed reaction is D-erythro-1-(imidazol-4-yl)glycerol 3-phosphate = 3-(imidazol-4-yl)-2-oxopropyl phosphate + H2O. Its pathway is amino-acid biosynthesis; L-histidine biosynthesis; L-histidine from 5-phospho-alpha-D-ribose 1-diphosphate: step 6/9. This is Imidazoleglycerol-phosphate dehydratase from Parafrankia sp. (strain EAN1pec).